The sequence spans 156 residues: 6,7-dimethyl-8-ribityllumazine synthase (156 aa).

5-amino-6-(D-ribitylamino)uracil is bound by residues Phe-22, 57–59 (AYE), and 81–83 (TVI). 86-87 (GT) contributes to the (2S)-2-hydroxy-3-oxobutyl phosphate binding site. The Proton donor role is filled by His-89. Residue Phe-114 coordinates 5-amino-6-(D-ribitylamino)uracil. Position 128 (Arg-128) interacts with (2S)-2-hydroxy-3-oxobutyl phosphate.

This sequence belongs to the DMRL synthase family. In terms of assembly, forms an icosahedral capsid composed of 60 subunits, arranged as a dodecamer of pentamers.

It catalyses the reaction (2S)-2-hydroxy-3-oxobutyl phosphate + 5-amino-6-(D-ribitylamino)uracil = 6,7-dimethyl-8-(1-D-ribityl)lumazine + phosphate + 2 H2O + H(+). It functions in the pathway cofactor biosynthesis; riboflavin biosynthesis; riboflavin from 2-hydroxy-3-oxobutyl phosphate and 5-amino-6-(D-ribitylamino)uracil: step 1/2. In terms of biological role, catalyzes the formation of 6,7-dimethyl-8-ribityllumazine by condensation of 5-amino-6-(D-ribitylamino)uracil with 3,4-dihydroxy-2-butanone 4-phosphate. This is the penultimate step in the biosynthesis of riboflavin. The chain is 6,7-dimethyl-8-ribityllumazine synthase from Photorhabdus laumondii subsp. laumondii (strain DSM 15139 / CIP 105565 / TT01) (Photorhabdus luminescens subsp. laumondii).